Consider the following 43-residue polypeptide: Defensin-B (43 aa).

3 cysteine pairs are disulfide-bonded: C3/C34, C20/C39, and C24/C41.

It localises to the secreted. In terms of biological role, antibacterial protein. Strong activity against the Gram-positive bacteria M.luteus, B.megaterium and S.aureus. Reduced activity against Gram-positive bacterium B.subtilis and weak activity against Gram-negative bacterium X.japonicus. No detectable activity against the Gram-negative bacteria E.asbriae, E.coli, P.aeruginosa and S.marcescens. This chain is Defensin-B, found in Anomala cuprea (Cupreous chafer beetle).